A 366-amino-acid polypeptide reads, in one-letter code: GTPase Obg (366 aa).

The 161-residue stretch at 1–161 (MRFVDEARIQ…FNLRLELKIL (161 aa)) folds into the Obg domain. Residues 121–148 (SGGRGGKGNEHFKSSTMRAPRFSQPGEP) are disordered. Residues 162 to 334 (ADAGLIGLPN…LVQELWQVCE (173 aa)) enclose the OBG-type G domain. Residues 168–175 (GLPNAGKS), 193–197 (FTTLT), 217–220 (DIPG), 287–290 (NKID), and 315–317 (SAR) contribute to the GTP site. Residues serine 175 and threonine 195 each coordinate Mg(2+).

Belongs to the TRAFAC class OBG-HflX-like GTPase superfamily. OBG GTPase family. Monomer. Mg(2+) serves as cofactor.

The protein localises to the cytoplasm. In terms of biological role, an essential GTPase which binds GTP, GDP and possibly (p)ppGpp with moderate affinity, with high nucleotide exchange rates and a fairly low GTP hydrolysis rate. Plays a role in control of the cell cycle, stress response, ribosome biogenesis and in those bacteria that undergo differentiation, in morphogenesis control. This is GTPase Obg from Desulfovibrio desulfuricans (strain ATCC 27774 / DSM 6949 / MB).